Reading from the N-terminus, the 209-residue chain is Large ribosomal subunit protein uL1 (209 aa).

This sequence belongs to the universal ribosomal protein uL1 family. Part of the 50S ribosomal subunit.

Its function is as follows. Binds directly to 23S rRNA. The L1 stalk is quite mobile in the ribosome, and is involved in E site tRNA release. In terms of biological role, protein L1 is also a translational repressor protein, it controls the translation of the L11 operon by binding to its mRNA. This Neorickettsia sennetsu (strain ATCC VR-367 / Miyayama) (Ehrlichia sennetsu) protein is Large ribosomal subunit protein uL1 (rplA).